The chain runs to 166 residues: uncharacterized protein (166 aa).

The HTH asnC-type domain maps to 3 to 65 (LTEKETEILE…IDWRKVDGHE (63 aa)). The segment at residues 22 to 41 (LETIAKMAGIPVNEVKTIID) is a DNA-binding region (H-T-H motif).

This is an uncharacterized protein from Bacillus subtilis (strain 168).